The sequence spans 269 residues: Formamidopyrimidine-DNA glycosylase (269 aa).

Pro-2 (schiff-base intermediate with DNA) is an active-site residue. Residue Glu-3 is the Proton donor of the active site. Lys-57 functions as the Proton donor; for beta-elimination activity in the catalytic mechanism. DNA contacts are provided by His-90, Arg-109, and Lys-150. Residues 235–269 (QVYGKGGLPCPKCGTELAEVKIGQRATVYCSQCQQ) form an FPG-type zinc finger. Residue Arg-259 is the Proton donor; for delta-elimination activity of the active site.

This sequence belongs to the FPG family. In terms of assembly, monomer. Zn(2+) serves as cofactor.

The enzyme catalyses Hydrolysis of DNA containing ring-opened 7-methylguanine residues, releasing 2,6-diamino-4-hydroxy-5-(N-methyl)formamidopyrimidine.. The catalysed reaction is 2'-deoxyribonucleotide-(2'-deoxyribose 5'-phosphate)-2'-deoxyribonucleotide-DNA = a 3'-end 2'-deoxyribonucleotide-(2,3-dehydro-2,3-deoxyribose 5'-phosphate)-DNA + a 5'-end 5'-phospho-2'-deoxyribonucleoside-DNA + H(+). In terms of biological role, involved in base excision repair of DNA damaged by oxidation or by mutagenic agents. Acts as a DNA glycosylase that recognizes and removes damaged bases. Has a preference for oxidized purines, such as 7,8-dihydro-8-oxoguanine (8-oxoG). Has AP (apurinic/apyrimidinic) lyase activity and introduces nicks in the DNA strand. Cleaves the DNA backbone by beta-delta elimination to generate a single-strand break at the site of the removed base with both 3'- and 5'-phosphates. This Photobacterium damsela subsp. piscicida (Pasteurella piscicida) protein is Formamidopyrimidine-DNA glycosylase.